Consider the following 106-residue polypeptide: Large ribosomal subunit protein uL24 (106 aa).

Belongs to the universal ribosomal protein uL24 family. As to quaternary structure, part of the 50S ribosomal subunit.

Functionally, one of two assembly initiator proteins, it binds directly to the 5'-end of the 23S rRNA, where it nucleates assembly of the 50S subunit. In terms of biological role, one of the proteins that surrounds the polypeptide exit tunnel on the outside of the subunit. In Spiroplasma kunkelii, this protein is Large ribosomal subunit protein uL24.